A 441-amino-acid chain; its full sequence is ATP-dependent protease ATPase subunit HslU (441 aa).

ATP-binding positions include valine 18, 60–65 (GVGKTE), aspartate 253, glutamate 319, and arginine 391.

Belongs to the ClpX chaperone family. HslU subfamily. As to quaternary structure, a double ring-shaped homohexamer of HslV is capped on each side by a ring-shaped HslU homohexamer. The assembly of the HslU/HslV complex is dependent on binding of ATP.

It is found in the cytoplasm. Functionally, ATPase subunit of a proteasome-like degradation complex; this subunit has chaperone activity. The binding of ATP and its subsequent hydrolysis by HslU are essential for unfolding of protein substrates subsequently hydrolyzed by HslV. HslU recognizes the N-terminal part of its protein substrates and unfolds these before they are guided to HslV for hydrolysis. The polypeptide is ATP-dependent protease ATPase subunit HslU (Nitratidesulfovibrio vulgaris (strain DP4) (Desulfovibrio vulgaris)).